Consider the following 76-residue polypeptide: Exodeoxyribonuclease 7 small subunit (76 aa).

It belongs to the XseB family. Heterooligomer composed of large and small subunits.

It is found in the cytoplasm. The enzyme catalyses Exonucleolytic cleavage in either 5'- to 3'- or 3'- to 5'-direction to yield nucleoside 5'-phosphates.. Bidirectionally degrades single-stranded DNA into large acid-insoluble oligonucleotides, which are then degraded further into small acid-soluble oligonucleotides. This chain is Exodeoxyribonuclease 7 small subunit, found in Enterococcus faecalis (strain ATCC 700802 / V583).